We begin with the raw amino-acid sequence, 512 residues long: Probable metalloreductase AIM14 (512 aa).

7 helical membrane passes run Ile20–Cys40, Pro61–Val81, Met97–Leu117, Val132–Gly152, Leu161–Leu181, Tyr191–Ala211, and Tyr218–Ala235. Positions Phe94–Leu206 constitute a Ferric oxidoreductase domain. Positions Ile230–Pro355 constitute an FAD-binding FR-type domain. Residues Glu427 to Ser436 are compositionally biased toward low complexity. The interval Glu427–Lys451 is disordered. The span at Arg437–Asp447 shows a compositional bias: polar residues.

Belongs to the ferric reductase (FRE) family. AIM14 subfamily.

It localises to the membrane. Its function is as follows. Probable cell surface metalloreductase. May be involved in iron or copper homeostasis. The chain is Probable metalloreductase AIM14 (AIM14) from Debaryomyces hansenii (strain ATCC 36239 / CBS 767 / BCRC 21394 / JCM 1990 / NBRC 0083 / IGC 2968) (Yeast).